The chain runs to 531 residues: Acetate CoA-transferase YdiF (531 aa).

Glu333 serves as the catalytic 5-glutamyl coenzyme A thioester intermediate.

Belongs to the 3-oxoacid CoA-transferase family. In terms of assembly, homotetramer; dimer of dimers.

The enzyme catalyses an acyl-CoA + acetate = a carboxylate + acetyl-CoA. Functionally, coA transferase having broad substrate specificity for short-chain acyl-CoA thioesters with the activity decreasing when the length of the carboxylic acid chain exceeds four carbons. May play a role in short-chain fatty acid metabolism in E.coli. The chain is Acetate CoA-transferase YdiF (ydiF) from Escherichia coli (strain K12).